The chain runs to 565 residues: NAD-dependent malic enzyme (565 aa).

Catalysis depends on Tyr-104, which acts as the Proton donor. NAD(+) is bound at residue Arg-157. Catalysis depends on Lys-175, which acts as the Proton acceptor. A divalent metal cation contacts are provided by Glu-246, Asp-247, and Asp-270. Residues Asp-270 and Asn-418 each coordinate NAD(+).

Belongs to the malic enzymes family. In terms of assembly, homotetramer. Mg(2+) is required as a cofactor. The cofactor is Mn(2+).

The enzyme catalyses (S)-malate + NAD(+) = pyruvate + CO2 + NADH. The catalysed reaction is oxaloacetate + H(+) = pyruvate + CO2. The sequence is that of NAD-dependent malic enzyme from Salmonella agona (strain SL483).